The primary structure comprises 76 residues: Translation initiation factor IF-1 (76 aa).

The S1-like domain occupies 1–76 (MEDMAKKDGV…TRGRIVYRYK (76 aa)).

Belongs to the IF-1 family. In terms of assembly, component of the 30S ribosomal translation pre-initiation complex which assembles on the 30S ribosome in the order IF-2 and IF-3, IF-1 and N-formylmethionyl-tRNA(fMet); mRNA recruitment can occur at any time during PIC assembly.

It is found in the cytoplasm. One of the essential components for the initiation of protein synthesis. Stabilizes the binding of IF-2 and IF-3 on the 30S subunit to which N-formylmethionyl-tRNA(fMet) subsequently binds. Helps modulate mRNA selection, yielding the 30S pre-initiation complex (PIC). Upon addition of the 50S ribosomal subunit IF-1, IF-2 and IF-3 are released leaving the mature 70S translation initiation complex. In Renibacterium salmoninarum (strain ATCC 33209 / DSM 20767 / JCM 11484 / NBRC 15589 / NCIMB 2235), this protein is Translation initiation factor IF-1.